The chain runs to 1358 residues: DNA-directed RNA polymerase subunit beta (1358 aa).

Belongs to the RNA polymerase beta chain family. In terms of assembly, the RNAP catalytic core consists of 2 alpha, 1 beta, 1 beta' and 1 omega subunit. When a sigma factor is associated with the core the holoenzyme is formed, which can initiate transcription.

The catalysed reaction is RNA(n) + a ribonucleoside 5'-triphosphate = RNA(n+1) + diphosphate. In terms of biological role, DNA-dependent RNA polymerase catalyzes the transcription of DNA into RNA using the four ribonucleoside triphosphates as substrates. The chain is DNA-directed RNA polymerase subunit beta from Francisella tularensis subsp. tularensis (strain FSC 198).